Reading from the N-terminus, the 188-residue chain is Ribosome-recycling factor (188 aa).

This sequence belongs to the RRF family.

It localises to the cytoplasm. Functionally, responsible for the release of ribosomes from messenger RNA at the termination of protein biosynthesis. May increase the efficiency of translation by recycling ribosomes from one round of translation to another. This is Ribosome-recycling factor from Blochmanniella pennsylvanica (strain BPEN).